The primary structure comprises 239 residues: Ribonuclease 3 (239 aa).

Residues 12-137 (RAKLESLIGH…LIAAIYLDGG (126 aa)) form the RNase III domain. Mg(2+) is bound at residue glutamate 50. The active site involves aspartate 54. 2 residues coordinate Mg(2+): aspartate 123 and glutamate 126. Glutamate 126 is an active-site residue. A DRBM domain is found at 162–231 (DAKTELQEWS…ATKMLEREGI (70 aa)).

It belongs to the ribonuclease III family. As to quaternary structure, homodimer. Mg(2+) serves as cofactor.

It localises to the cytoplasm. It carries out the reaction Endonucleolytic cleavage to 5'-phosphomonoester.. In terms of biological role, digests double-stranded RNA. Involved in the processing of primary rRNA transcript to yield the immediate precursors to the large and small rRNAs (23S and 16S). Processes some mRNAs, and tRNAs when they are encoded in the rRNA operon. Processes pre-crRNA and tracrRNA of type II CRISPR loci if present in the organism. This chain is Ribonuclease 3, found in Rhizobium etli (strain CIAT 652).